A 118-amino-acid chain; its full sequence is DNA-binding protein MmarC5_1518 (118 aa).

The segment covering 1 to 12 (MNPEEIRQRRLQ) has biased composition (basic and acidic residues). Residues 1-35 (MNPEEIRQRRLQEMQAKAQEQGAEDPEAQRQAQEQ) form a disordered region.

This sequence belongs to the PDCD5 family.

This is DNA-binding protein MmarC5_1518 from Methanococcus maripaludis (strain C5 / ATCC BAA-1333).